The sequence spans 111 residues: Guanylate cyclase activator 2B (111 aa).

A signal peptide spans 1-26 (MGSRTLLGHLSVLAVVLLLLLQGTQS). Residues 27 to 96 (VDIKYQGYQV…SILQALRTMD (70 aa)) constitute a propeptide that is removed on maturation. 3 disulfides stabilise this stretch: Cys67-Cys80, Cys100-Cys108, and Cys103-Cys111.

This sequence belongs to the guanylin family.

It localises to the secreted. Functionally, endogenous activator of intestinal guanylate cyclase. It stimulates this enzyme through the same receptor binding region as the heat-stable enterotoxins. May be a potent physiological regulator of intestinal fluid and electrolyte transport. May be an autocrine/paracrine regulator of intestinal salt and water transport. The chain is Guanylate cyclase activator 2B (GUCA2B) from Cavia porcellus (Guinea pig).